Here is a 180-residue protein sequence, read N- to C-terminus: ATP synthase subunit delta (180 aa).

It belongs to the ATPase delta chain family. In terms of assembly, F-type ATPases have 2 components, F(1) - the catalytic core - and F(0) - the membrane proton channel. F(1) has five subunits: alpha(3), beta(3), gamma(1), delta(1), epsilon(1). F(0) has three main subunits: a(1), b(2) and c(10-14). The alpha and beta chains form an alternating ring which encloses part of the gamma chain. F(1) is attached to F(0) by a central stalk formed by the gamma and epsilon chains, while a peripheral stalk is formed by the delta and b chains.

The protein resides in the cell membrane. Functionally, f(1)F(0) ATP synthase produces ATP from ADP in the presence of a proton or sodium gradient. F-type ATPases consist of two structural domains, F(1) containing the extramembraneous catalytic core and F(0) containing the membrane proton channel, linked together by a central stalk and a peripheral stalk. During catalysis, ATP synthesis in the catalytic domain of F(1) is coupled via a rotary mechanism of the central stalk subunits to proton translocation. This protein is part of the stalk that links CF(0) to CF(1). It either transmits conformational changes from CF(0) to CF(1) or is implicated in proton conduction. The sequence is that of ATP synthase subunit delta from Pediococcus pentosaceus (strain ATCC 25745 / CCUG 21536 / LMG 10740 / 183-1w).